We begin with the raw amino-acid sequence, 166 residues long: MEMSNAQRLILSNQYNLMSQLDPNNAAKYKRLQTIVERGYELQMRELNKDFGCLSEAECREIIDIMEMYHAMQESNNMLDAEERSKVDQRRLQFLGFDIATEAQQVHYVRFLVDSEGLYPQFDKADHHFNSQMPMLDKYRRMLQTWRNCPRQYHLCENELAQIFSA.

Belongs to the UPF0304 family.

The protein is UPF0304 protein VP0990 of Vibrio parahaemolyticus serotype O3:K6 (strain RIMD 2210633).